The following is a 266-amino-acid chain: Glucosamine-6-phosphate deaminase (266 aa).

The active-site Proton acceptor; for enolization step is aspartate 72. Aspartate 141 serves as the catalytic For ring-opening step. Histidine 143 (proton acceptor; for ring-opening step) is an active-site residue. The For ring-opening step role is filled by glutamate 148.

It belongs to the glucosamine/galactosamine-6-phosphate isomerase family. NagB subfamily. In terms of assembly, homohexamer.

The enzyme catalyses alpha-D-glucosamine 6-phosphate + H2O = beta-D-fructose 6-phosphate + NH4(+). Its pathway is amino-sugar metabolism; N-acetylneuraminate degradation; D-fructose 6-phosphate from N-acetylneuraminate: step 5/5. Its activity is regulated as follows. Allosterically activated by N-acetylglucosamine 6-phosphate (GlcNAc6P). Catalyzes the reversible isomerization-deamination of glucosamine 6-phosphate (GlcN6P) to form fructose 6-phosphate (Fru6P) and ammonium ion. This chain is Glucosamine-6-phosphate deaminase, found in Cronobacter sakazakii (strain ATCC BAA-894) (Enterobacter sakazakii).